Consider the following 282-residue polypeptide: MEMO1 family protein Cmaq_1590 (282 aa).

It belongs to the MEMO1 family.

The protein is MEMO1 family protein Cmaq_1590 of Caldivirga maquilingensis (strain ATCC 700844 / DSM 13496 / JCM 10307 / IC-167).